A 395-amino-acid polypeptide reads, in one-letter code: Chaperone protein DnaJ (395 aa).

Positions 5-70 constitute a J domain; sequence DFYEVLGVDK…NKRAAYDRMG (66 aa). Residues 145–223 form a CR-type zinc finger; sequence GKDETIKVPT…CDGVGRVRKT (79 aa). Zn(2+) contacts are provided by Cys158, Cys161, Cys175, Cys178, Cys197, Cys200, Cys211, and Cys214. CXXCXGXG motif repeat units follow at residues 158–165, 175–182, 197–204, and 211–218; these read CERCDGQG, CGTCQGAG, CPQCGGRG, and CNDCDGVG.

It belongs to the DnaJ family. As to quaternary structure, homodimer. Zn(2+) is required as a cofactor.

Its subcellular location is the cytoplasm. In terms of biological role, participates actively in the response to hyperosmotic and heat shock by preventing the aggregation of stress-denatured proteins and by disaggregating proteins, also in an autonomous, DnaK-independent fashion. Unfolded proteins bind initially to DnaJ; upon interaction with the DnaJ-bound protein, DnaK hydrolyzes its bound ATP, resulting in the formation of a stable complex. GrpE releases ADP from DnaK; ATP binding to DnaK triggers the release of the substrate protein, thus completing the reaction cycle. Several rounds of ATP-dependent interactions between DnaJ, DnaK and GrpE are required for fully efficient folding. Also involved, together with DnaK and GrpE, in the DNA replication of plasmids through activation of initiation proteins. In Maricaulis maris (strain MCS10) (Caulobacter maris), this protein is Chaperone protein DnaJ.